Here is an 85-residue protein sequence, read N- to C-terminus: U4-theraphotoxin-Hhn1q (85 aa).

An N-terminal signal peptide occupies residues 1–22 (MKVTLIAILTCAAVLVLHTTAA). The propeptide occupies 23–48 (EELEAESQLMEVGMPDTELAAVDEER). Cystine bridges form between C52–C66, C56–C77, and C71–C82.

Belongs to the neurotoxin 12 (Hwtx-2) family. 02 (Hwtx-2) subfamily. In terms of tissue distribution, expressed by the venom gland.

It is found in the secreted. In terms of biological role, postsynaptic neurotoxin. The protein is U4-theraphotoxin-Hhn1q of Cyriopagopus hainanus (Chinese bird spider).